We begin with the raw amino-acid sequence, 362 residues long: S-adenosylmethionine decarboxylase proenzyme (362 aa).

Residues Glu11 and Glu14 contribute to the active site. Catalysis depends on Ser71, which acts as the Schiff-base intermediate with substrate; via pyruvic acid. Residue Ser71 is modified to Pyruvic acid (Ser); by autocatalysis. Cys85 functions as the Proton donor; for catalytic activity in the catalytic mechanism. Active-site proton acceptor; for processing activity residues include Ser234 and His247.

The protein belongs to the eukaryotic AdoMetDC family. The cofactor is pyruvate. Post-translationally, is synthesized initially as an inactive proenzyme. Formation of the active enzyme involves a self-maturation process in which the active site pyruvoyl group is generated from an internal serine residue via an autocatalytic post-translational modification. Two non-identical subunits are generated from the proenzyme in this reaction, and the pyruvate is formed at the N-terminus of the alpha chain, which is derived from the carboxyl end of the proenzyme. The post-translation cleavage follows an unusual pathway, termed non-hydrolytic serinolysis, in which the side chain hydroxyl group of the serine supplies its oxygen atom to form the C-terminus of the beta chain, while the remainder of the serine residue undergoes an oxidative deamination to produce ammonia and the pyruvoyl group blocking the N-terminus of the alpha chain.

It catalyses the reaction S-adenosyl-L-methionine + H(+) = S-adenosyl 3-(methylsulfanyl)propylamine + CO2. The protein operates within amine and polyamine biosynthesis; S-adenosylmethioninamine biosynthesis; S-adenosylmethioninamine from S-adenosyl-L-methionine: step 1/1. The chain is S-adenosylmethionine decarboxylase proenzyme (SAMDC) from Ipomoea batatas (Sweet potato).